We begin with the raw amino-acid sequence, 463 residues long: Na(+)/H(+) antiporter NhaA 3 (463 aa).

11 helical membrane passes run 28-48 (FLAT…AALL), 79-99 (LHHW…GLEI), 114-134 (IAVP…IYFV), 144-164 (GWGI…ALFG), 173-193 (LFLL…VGIF), 196-216 (DHLN…ILGL), 232-252 (LVLW…GVLV), 305-325 (VLHP…NAGV), 344-364 (VAAA…VAAI), 377-397 (YGHL…SLFI), and 413-433 (IGIL…LRVL). A disordered region spans residues 444-463 (TDEPVPRLPPRPWRAPVPAK). Over residues 449–463 (PRLPPRPWRAPVPAK) the composition is skewed to pro residues.

This sequence belongs to the NhaA Na(+)/H(+) (TC 2.A.33) antiporter family.

It localises to the cell membrane. The catalysed reaction is Na(+)(in) + 2 H(+)(out) = Na(+)(out) + 2 H(+)(in). Na(+)/H(+) antiporter that extrudes sodium in exchange for external protons. The sequence is that of Na(+)/H(+) antiporter NhaA 3 from Frankia alni (strain DSM 45986 / CECT 9034 / ACN14a).